The sequence spans 104 residues: Large ribosomal subunit protein cL38 (104 aa).

Residues 1 to 39 (MASVSSIFGCGVSMAPNSSLRNKAIRTERRSACGGLLIE) constitute a chloroplast transit peptide. The interval 42 to 76 (SRPQKKSTAHHMKTRPRKSRLSDRNRKPTVYAPLP) is disordered. The span at 44–60 (PQKKSTAHHMKTRPRKS) shows a compositional bias: basic residues.

Belongs to the chloroplast-specific ribosomal protein cL38 family. Part of the 50S ribosomal subunit.

It localises to the plastid. The protein resides in the chloroplast. The protein is Large ribosomal subunit protein cL38 (PSRP6) of Pisum sativum (Garden pea).